The sequence spans 216 residues: 3-isopropylmalate dehydratase small subunit (216 aa).

The protein belongs to the LeuD family. LeuD type 1 subfamily. In terms of assembly, heterodimer of LeuC and LeuD.

It carries out the reaction (2R,3S)-3-isopropylmalate = (2S)-2-isopropylmalate. It functions in the pathway amino-acid biosynthesis; L-leucine biosynthesis; L-leucine from 3-methyl-2-oxobutanoate: step 2/4. Its function is as follows. Catalyzes the isomerization between 2-isopropylmalate and 3-isopropylmalate, via the formation of 2-isopropylmaleate. In Psychrobacter sp. (strain PRwf-1), this protein is 3-isopropylmalate dehydratase small subunit.